We begin with the raw amino-acid sequence, 99 residues long: MVNVPKTKRAFCKGCKKHMMMKVTQYKTGKASLYAQGKRRYDRKQSGYGGQTKPVFHKKAKTTKKIVLRMQCQECKQTCMKGLKRCKHFEIGGDKKKGN.

This sequence belongs to the eukaryotic ribosomal protein eL42 family.

This chain is Large ribosomal subunit protein eL42 (RPL44), found in Chlamydomonas reinhardtii (Chlamydomonas smithii).